Reading from the N-terminus, the 411-residue chain is Serine--tRNA ligase (411 aa).

226-228 (TSE) is an L-serine binding site. 257-259 (RQE) lines the ATP pocket. Glu-280 provides a ligand contact to L-serine. Residue 344 to 347 (EISS) participates in ATP binding. Position 379 (Ser-379) interacts with L-serine.

The protein belongs to the class-II aminoacyl-tRNA synthetase family. Type-1 seryl-tRNA synthetase subfamily. In terms of assembly, homodimer. The tRNA molecule binds across the dimer.

The protein resides in the cytoplasm. The enzyme catalyses tRNA(Ser) + L-serine + ATP = L-seryl-tRNA(Ser) + AMP + diphosphate + H(+). It catalyses the reaction tRNA(Sec) + L-serine + ATP = L-seryl-tRNA(Sec) + AMP + diphosphate + H(+). The protein operates within aminoacyl-tRNA biosynthesis; selenocysteinyl-tRNA(Sec) biosynthesis; L-seryl-tRNA(Sec) from L-serine and tRNA(Sec): step 1/1. Catalyzes the attachment of serine to tRNA(Ser). Is also able to aminoacylate tRNA(Sec) with serine, to form the misacylated tRNA L-seryl-tRNA(Sec), which will be further converted into selenocysteinyl-tRNA(Sec). This chain is Serine--tRNA ligase, found in Campylobacter lari (strain RM2100 / D67 / ATCC BAA-1060).